The primary structure comprises 433 residues: 26S proteasome regulatory subunit 7 (433 aa).

Residues 1–23 form a disordered region; it reads MPDYLGADQRKTKEEEKEDKPIR. The segment covering 8–23 has biased composition (basic and acidic residues); it reads DQRKTKEEEKEDKPIR. 216 to 223 lines the ATP pocket; sequence GPPGTGKT.

It belongs to the AAA ATPase family. In terms of processing, phosphorylated. Dephosphorylated by ublcp1 which impairs psmc2 ATPase activity and disrupts 26S proteasome assembly.

The protein localises to the cytoplasm. It localises to the nucleus. In terms of biological role, the 26S proteasome is involved in the ATP-dependent degradation of ubiquitinated proteins. The regulatory (or ATPase) complex confers ATP dependency and substrate specificity to the 26S complex. In Xenopus laevis (African clawed frog), this protein is 26S proteasome regulatory subunit 7 (psmc2).